The primary structure comprises 399 residues: Ribose-phosphate pyrophosphokinase 2, chloroplastic (399 aa).

A chloroplast-targeting transit peptide spans 1–32 (MAAKAAALSSSPFVSSRRLSSPAASLRARTPR). Asp214, His216, Asp225, and Asp229 together coordinate Mg(2+). The interval 299–314 (GKVAIMVDDMIDTAGT) is binding of phosphoribosylpyrophosphate.

Belongs to the ribose-phosphate pyrophosphokinase family. Mg(2+) serves as cofactor.

It localises to the plastid. The protein resides in the chloroplast. The catalysed reaction is D-ribose 5-phosphate + ATP = 5-phospho-alpha-D-ribose 1-diphosphate + AMP + H(+). This is Ribose-phosphate pyrophosphokinase 2, chloroplastic from Oryza sativa subsp. japonica (Rice).